A 421-amino-acid chain; its full sequence is 4-hydroxy-3-methylbut-2-en-1-yl diphosphate synthase (flavodoxin) (421 aa).

[4Fe-4S] cluster contacts are provided by C298, C301, C344, and E351.

It belongs to the IspG family. The cofactor is [4Fe-4S] cluster.

The catalysed reaction is (2E)-4-hydroxy-3-methylbut-2-enyl diphosphate + oxidized [flavodoxin] + H2O + 2 H(+) = 2-C-methyl-D-erythritol 2,4-cyclic diphosphate + reduced [flavodoxin]. It functions in the pathway isoprenoid biosynthesis; isopentenyl diphosphate biosynthesis via DXP pathway; isopentenyl diphosphate from 1-deoxy-D-xylulose 5-phosphate: step 5/6. Converts 2C-methyl-D-erythritol 2,4-cyclodiphosphate (ME-2,4cPP) into 1-hydroxy-2-methyl-2-(E)-butenyl 4-diphosphate. In Neisseria gonorrhoeae (strain ATCC 700825 / FA 1090), this protein is 4-hydroxy-3-methylbut-2-en-1-yl diphosphate synthase (flavodoxin).